The chain runs to 318 residues: Probable 3-hydroxyisobutyrate dehydrogenase-like 3, mitochondrial (318 aa).

Residues 35–64 and Ser-129 contribute to the NAD(+) site; that span reads TRIG…TVYA. Residue Lys-203 is part of the active site. Residue Lys-271 participates in NAD(+) binding.

The protein belongs to the HIBADH-related family. 3-hydroxyisobutyrate dehydrogenase subfamily.

Its subcellular location is the mitochondrion. It carries out the reaction 3-hydroxy-2-methylpropanoate + NAD(+) = 2-methyl-3-oxopropanoate + NADH + H(+). The protein operates within amino-acid degradation; L-valine degradation. The protein is Probable 3-hydroxyisobutyrate dehydrogenase-like 3, mitochondrial of Arabidopsis thaliana (Mouse-ear cress).